A 417-amino-acid polypeptide reads, in one-letter code: Serine hydroxymethyltransferase 1 (417 aa).

(6S)-5,6,7,8-tetrahydrofolate contacts are provided by residues L121 and 125-127; that span reads GHL. K230 is subject to N6-(pyridoxal phosphate)lysine. 355-357 serves as a coordination point for (6S)-5,6,7,8-tetrahydrofolate; that stretch reads SPF.

It belongs to the SHMT family. Homodimer. Requires pyridoxal 5'-phosphate as cofactor.

It is found in the cytoplasm. The enzyme catalyses (6R)-5,10-methylene-5,6,7,8-tetrahydrofolate + glycine + H2O = (6S)-5,6,7,8-tetrahydrofolate + L-serine. It functions in the pathway one-carbon metabolism; tetrahydrofolate interconversion. The protein operates within amino-acid biosynthesis; glycine biosynthesis; glycine from L-serine: step 1/1. Functionally, catalyzes the reversible interconversion of serine and glycine with tetrahydrofolate (THF) serving as the one-carbon carrier. This reaction serves as the major source of one-carbon groups required for the biosynthesis of purines, thymidylate, methionine, and other important biomolecules. Also exhibits THF-independent aldolase activity toward beta-hydroxyamino acids, producing glycine and aldehydes, via a retro-aldol mechanism. This chain is Serine hydroxymethyltransferase 1, found in Pseudomonas aeruginosa (strain ATCC 15692 / DSM 22644 / CIP 104116 / JCM 14847 / LMG 12228 / 1C / PRS 101 / PAO1).